The primary structure comprises 51 residues: Lantibiotic lacticin-481 (51 aa).

A propeptide spanning residues 1–24 is cleaved from the precursor; it reads MKEQNSFNLLQEVTESELDLILGA. Positions 33–38 form a cross-link, beta-methyllanthionine (Thr-Cys); that stretch reads TISHEC. Cross-links (lanthionine (Ser-Cys)) lie at residues 35 to 49 and 42 to 50; these read SHEC…VFTC and SWQFVFTCC. Position 48 is a (Z)-2,3-didehydrobutyrine (Thr-48).

This sequence belongs to the type A lantibiotic family. Monomer or homodimer. Post-translationally, maturation of lantibiotics involves the enzymatic conversion of Thr, and Ser into dehydrated AA and the formation of thioether bonds with cysteine. This is followed by membrane translocation and cleavage of the modified precursor. It is established that the 2,3-didehydrobutyrine is the Z-isomer.

Its function is as follows. Lanthionine-containing peptide antibiotic (lantibiotic) active on Gram-positive bacteria. The bactericidal activity of lantibiotics is based on depolarization of energized bacterial cytoplasmic membranes, initiated by the formation of aqueous transmembrane pores. Lacticin 481 is a broad spectrum bacteriocin exhibiting activity against a wide range of lactic acid bacteria and C.tyrobutyricum. The chain is Lantibiotic lacticin-481 (lctA) from Lactococcus lactis subsp. lactis (Streptococcus lactis).